The primary structure comprises 473 residues: MTSLPGRGVSPSSSDPLCEGNAAPSSSSSGQDLKQSKNSILSCVFSSPFSIFEAHQDSSAHRPLKPHSGSYAWSRFLRRIACTGSMWRFLGASKALTSSDVWFLGKCYKLSSEELSNSSDCESGNAAFLEDFSSRIWITYRKGFDAISDSKYTSDVNWGCMVRSSQMLVAQALIFHHLGRSWRKPSQKPYSPEYIGILHMFGDSEACAFSIHNLLQAGKSYGLAAGSWVGPYAMCRAWQTLVRTNREHHEAVDGNGNFPMALYVVSGDEDGERGGAPVVCIDVAAQLCCDFNKGQSTWSPILLLVPLVLGLDKLNPRYIPLLKETFTFPQSLGILGGKPGTSTYVAGVQDDRVLYLDPHEVQLAVDIAADNLEADTSSYHCSTVRDLALDLIDPSLAIGFYCRDKDDFDDFCSRASELVDKANGAPLFTVMQSVQPSKQMYNEESSSGDGMDIINVEGLDGSGETGEEEWQIL.

Positions 1 to 33 (MTSLPGRGVSPSSSDPLCEGNAAPSSSSSGQDL) are disordered. Residue Cys-160 is the Nucleophile of the active site. Catalysis depends on residues Asp-357 and His-359.

It belongs to the peptidase C54 family. In terms of assembly, interacts with ATG8.

It is found in the cytoplasm. It catalyses the reaction [protein]-C-terminal L-amino acid-glycyl-phosphatidylethanolamide + H2O = [protein]-C-terminal L-amino acid-glycine + a 1,2-diacyl-sn-glycero-3-phosphoethanolamine. Its function is as follows. Cysteine protease that plays a key role in autophagy by mediating both proteolytic activation and delipidation of ATG8 family proteins. The protease activity is required for proteolytic activation of ATG8 family proteins: cleaves the C-terminal amino acid of ATG8 proteins to reveal a C-terminal glycine. Exposure of the glycine at the C-terminus is essential for ATG8 proteins conjugation to phosphatidylethanolamine (PE) and insertion to membranes, which is necessary for autophagy. In addition to the protease activity, also mediates delipidation of PE-conjugated ATG8 proteins. The protein is Cysteine protease ATG4A (ATG4A) of Oryza sativa subsp. indica (Rice).